A 293-amino-acid chain; its full sequence is Decaprenyl diphosphate synthase (293 aa).

Residues 1–24 (MATTRGKKTYPQLPPAPDDYPTFP) form a disordered region. Residue Asp73 is part of the active site. Asp73 is a binding site for Mg(2+). Residues 74–77 (GNGR), Trp78, Arg86, His90, and 118–120 (STE) contribute to the substrate site. Asn121 functions as the Proton acceptor in the catalytic mechanism. Residues Trp122, Arg124, Arg241, and 247-249 (RAS) contribute to the substrate site. Glu260 lines the Mg(2+) pocket.

It belongs to the UPP synthase family. Homodimer. It depends on Mg(2+) as a cofactor.

It localises to the cell membrane. The catalysed reaction is (2Z,6E)-farnesyl diphosphate + 7 isopentenyl diphosphate = (2Z,6Z,10Z,14Z,18Z,22Z,26Z,30Z,34E)-decaprenyl diphosphate + 7 diphosphate. It carries out the reaction n isopentenyl diphosphate + (2E,6E)-farnesyl diphosphate = a di-trans,poly-cis-polyprenyl diphosphate + n diphosphate. Functionally, catalyzes the sequential condensation of isopentenyl diphosphate (IPP) in the cis configuration with (2Z,6E)-farnesyl diphosphate (Z-FPP or EZ-FPP) generating the 50 carbon product trans,polycis-decaprenyl diphosphate. When (2E,6E)-farnesyl diphosphate (E-FPP or EE-FPP) is used in vitro, both primary products decaprenyl diphosphate and heptaprenyl diphosphate are synthesized. It is probably due to the fact that M.smegmatis synthesizes both (2E,6E,10E)-geranylgeranyl diphosphate (EEE-GGPP) and (2E,6E,10Z)-geranylgeranyl diphosphate (EEZ-GGPP). Can also accept many different allylic substrates, including E-geranyl diphosphate (E-GPP), neryl diphosphate (NPP), and all-trans-geranyl-geranyl diphosphate. The protein is Decaprenyl diphosphate synthase (uppS) of Mycolicibacterium smegmatis (strain ATCC 700084 / mc(2)155) (Mycobacterium smegmatis).